The sequence spans 95 residues: Protein IDA-LIKE 2 (95 aa).

An N-terminal signal peptide occupies residues 1–35 (MSSRNQRSRITSSFFVSFFTRTILLLLILLLGFCN). Residues 75–95 (ASGPSRKHNDIGLLSWHRSSP) form a disordered region.

Expressed in leaves, buds, flowers, seedlings and seeds. Detected at the base of pedicel, in the floral and funicule abscission zones and in vascular tissues.

The protein resides in the secreted. It localises to the extracellular space. Functionally, may be involved in floral abscission. This Arabidopsis thaliana (Mouse-ear cress) protein is Protein IDA-LIKE 2 (IDL2).